Reading from the N-terminus, the 942-residue chain is Protein NLP1 (942 aa).

Pro residues predominate over residues 1–11 (MEQKPSPPPPP). Disordered regions lie at residues 1-32 (MEQKPSPPPPPRSDEEEDGLMGCGMGGTGDIA), 77-106 (TTPAPAAGEDDRDEAEMPSRGGGGLEVSPA), 594-620 (VKENTCSSDPSNSNSDKAVEKRRTKTE), 723-753 (FQLEPSVPDRPCEGRFTSHTSGSNSISPSCS), and 759-778 (SLGCSSVPKTQQQHGSAPQL). The span at 21–32 (MGCGMGGTGDIA) shows a compositional bias: gly residues. A compositionally biased stretch (polar residues) spans 597–609 (NTCSSDPSNSNSD). Residues 609–690 (DKAVEKRRTK…IDSVHGPEGT (82 aa)) enclose the RWP-RK domain. A compositionally biased stretch (low complexity) spans 743–753 (SGSNSISPSCS). A compositionally biased stretch (polar residues) spans 765-774 (VPKTQQQHGS). Residues 844 to 927 (SLKIKAIYGE…QTVRILVNPS (84 aa)) enclose the PB1 domain.

The protein localises to the nucleus. In terms of biological role, probable transcription factor. The protein is Protein NLP1 (NLP1) of Oryza sativa subsp. japonica (Rice).